We begin with the raw amino-acid sequence, 59 residues long: Large ribosomal subunit protein bL32 (59 aa).

It belongs to the bacterial ribosomal protein bL32 family.

This chain is Large ribosomal subunit protein bL32, found in Desulfitobacterium hafniense (strain Y51).